We begin with the raw amino-acid sequence, 192 residues long: Imidazoleglycerol-phosphate dehydratase (192 aa).

The protein belongs to the imidazoleglycerol-phosphate dehydratase family.

Its subcellular location is the cytoplasm. It catalyses the reaction D-erythro-1-(imidazol-4-yl)glycerol 3-phosphate = 3-(imidazol-4-yl)-2-oxopropyl phosphate + H2O. It functions in the pathway amino-acid biosynthesis; L-histidine biosynthesis; L-histidine from 5-phospho-alpha-D-ribose 1-diphosphate: step 6/9. This is Imidazoleglycerol-phosphate dehydratase from Clostridioides difficile (strain 630) (Peptoclostridium difficile).